The primary structure comprises 852 residues: Tiger protein I3 (852 aa).

A signal peptide spans methionine 1–serine 18. Topologically, residues tyrosine 19–asparagine 830 are extracellular. Asparagine 31, asparagine 47, asparagine 67, asparagine 97, asparagine 129, asparagine 201, asparagine 215, asparagine 228, asparagine 260, asparagine 323, asparagine 352, asparagine 356, asparagine 404, asparagine 441, asparagine 476, asparagine 483, asparagine 501, asparagine 512, asparagine 574, asparagine 592, asparagine 635, asparagine 658, asparagine 661, asparagine 679, asparagine 680, asparagine 723, asparagine 757, asparagine 761, asparagine 773, asparagine 785, and asparagine 800 each carry an N-linked (GlcNAc...) asparagine glycan. The region spanning isoleucine 290–aspartate 367 is the IPT/TIG domain. Residues isoleucine 831–asparagine 851 form a helical membrane-spanning segment. A topological domain (cytoplasmic) is located at residue isoleucine 852.

The protein resides in the membrane. The polypeptide is Tiger protein I3 (tgrI3) (Dictyostelium discoideum (Social amoeba)).